The chain runs to 200 residues: Ras-related protein Rab-7b (200 aa).

GTP contacts are provided by residues 15 to 22 (GALGVGKT), 34 to 40 (YEDYQTT), 63 to 67 (DTGGQ), 124 to 127 (NKID), and 154 to 155 (AK). Short sequence motifs (switch) lie at residues 28-41 (YVHKTFYEDYQTTL) and 67-82 (QERFRSMVSTFYKGSD). Position 186 is a phosphoserine (serine 186). 2 S-geranylgeranyl cysteine lipidation sites follow: cysteine 199 and cysteine 200.

Belongs to the small GTPase superfamily. Rab family.

The protein resides in the late endosome. The protein localises to the lysosome. It is found in the golgi apparatus. Its subcellular location is the trans-Golgi network. It localises to the cytoplasmic vesicle. The protein resides in the phagosome. The protein localises to the phagosome membrane. Its function is as follows. Controls vesicular trafficking from endosomes to the trans-Golgi network (TGN). Acts as a negative regulator of TLR9 signaling and can suppress TLR9-triggered TNFA, IL6, and IFNB production in macrophages by promoting TLR9 lysosomal degradation. Also negatively regulates TLR4 signaling in macrophages by promoting lysosomal degradation of TLR4. Promotes megakaryocytic differentiation by increasing NF-kappa-B-dependent IL6 production and subsequently enhancing the association of STAT3 with GATA1. Not involved in the regulation of the EGF- and EGFR degradation pathway. The chain is Ras-related protein Rab-7b (RAB7B) from Bos taurus (Bovine).